Consider the following 326-residue polypeptide: Phospho-N-acetylmuramoyl-pentapeptide-transferase (326 aa).

Transmembrane regions (helical) follow at residues 2–22 (ILAT…FPYF), 51–71 (VPPM…LLWA), 73–93 (LTPE…LGFI), 113–133 (ILIQ…YSAE), 143–163 (GVII…IVGS), 175–195 (GLAA…AYIT), 199–219 (MNIT…LWFN), 225–245 (IFMG…TSVL), 250–270 (MLFA…IIQI), and 305–325 (VIVM…ITFL).

Belongs to the glycosyltransferase 4 family. MraY subfamily. The cofactor is Mg(2+).

The protein localises to the cell membrane. The catalysed reaction is UDP-N-acetyl-alpha-D-muramoyl-L-alanyl-gamma-D-glutamyl-meso-2,6-diaminopimeloyl-D-alanyl-D-alanine + di-trans,octa-cis-undecaprenyl phosphate = di-trans,octa-cis-undecaprenyl diphospho-N-acetyl-alpha-D-muramoyl-L-alanyl-D-glutamyl-meso-2,6-diaminopimeloyl-D-alanyl-D-alanine + UMP. Its pathway is cell wall biogenesis; peptidoglycan biosynthesis. Catalyzes the initial step of the lipid cycle reactions in the biosynthesis of the cell wall peptidoglycan: transfers peptidoglycan precursor phospho-MurNAc-pentapeptide from UDP-MurNAc-pentapeptide onto the lipid carrier undecaprenyl phosphate, yielding undecaprenyl-pyrophosphoryl-MurNAc-pentapeptide, known as lipid I. The chain is Phospho-N-acetylmuramoyl-pentapeptide-transferase from Wolbachia pipientis wMel.